The primary structure comprises 124 residues: NADH-quinone oxidoreductase subunit A (124 aa).

The next 3 membrane-spanning stretches (helical) occupy residues 11 to 31 (YLPI…IMIL), 68 to 88 (LVAI…PWAI), and 93 to 113 (IGKI…IGFV).

This sequence belongs to the complex I subunit 3 family. In terms of assembly, NDH-1 is composed of 14 different subunits. Subunits NuoA, H, J, K, L, M, N constitute the membrane sector of the complex.

It is found in the cell inner membrane. The catalysed reaction is a quinone + NADH + 5 H(+)(in) = a quinol + NAD(+) + 4 H(+)(out). In terms of biological role, NDH-1 shuttles electrons from NADH, via FMN and iron-sulfur (Fe-S) centers, to quinones in the respiratory chain. The immediate electron acceptor for the enzyme in this species is believed to be ubiquinone. Couples the redox reaction to proton translocation (for every two electrons transferred, four hydrogen ions are translocated across the cytoplasmic membrane), and thus conserves the redox energy in a proton gradient. This is NADH-quinone oxidoreductase subunit A from Rickettsia bellii (strain RML369-C).